Here is a 268-residue protein sequence, read N- to C-terminus: Hydroxyacylglutathione hydrolase (268 aa).

Positions 56, 58, 60, 61, 113, 130, and 168 each coordinate Zn(2+).

This sequence belongs to the metallo-beta-lactamase superfamily. Glyoxalase II family. As to quaternary structure, monomer. It depends on Zn(2+) as a cofactor.

It carries out the reaction an S-(2-hydroxyacyl)glutathione + H2O = a 2-hydroxy carboxylate + glutathione + H(+). The protein operates within secondary metabolite metabolism; methylglyoxal degradation; (R)-lactate from methylglyoxal: step 2/2. Its function is as follows. Thiolesterase that catalyzes the hydrolysis of S-D-lactoyl-glutathione to form glutathione and D-lactic acid. The polypeptide is Hydroxyacylglutathione hydrolase (Hydrogenovibrio crunogenus (strain DSM 25203 / XCL-2) (Thiomicrospira crunogena)).